The primary structure comprises 153 residues: Cystatin-9 (153 aa).

The first 27 residues, 1–27 (MGRQRRCRWAQPWTLLLLLLGPRLLVT), serve as a signal peptide directing secretion.

It belongs to the cystatin family.

The protein localises to the secreted. Functionally, may play a role in hematopoietic differentiation or inflammation. The protein is Cystatin-9 (CST9) of Bos taurus (Bovine).